A 674-amino-acid polypeptide reads, in one-letter code: Glutaminase kidney isoform, mitochondrial (674 aa).

Residues 1–54 constitute a mitochondrion transit peptide; it reads MMRLRGSAMLRELLLRPPAAVGGVLRRTQPLGTLCRRPRGGSRPAAGLVAAARL. The interval 56 to 123 is disordered; the sequence is PWWGGGGRAK…PGETDAFGNS (68 aa). Over residues 58-71 the composition is skewed to gly residues; sequence WGGGGRAKGPGSGG. The span at 89-101 shows a compositional bias: low complexity; sequence PPQQQQQQQQQPG. K135 and K169 each carry N6-succinyllysine. A substrate-binding site is contributed by S291. K316 carries the post-translational modification N6-acetyllysine. The highly mobile activation loop stretch occupies residues 320 to 327; it reads GLRFNKLF. Substrate is bound by residues N340, E386, N393, Y419, Y471, and V489. 2 ANK repeats span residues 590–619 and 624–653; these read DSRT…VNPF and WNNT…QYTP. The tract at residues 652 to 674 is disordered; that stretch reads TPQGDSDDGKENQTVHKNLDGLL. S657 carries the phosphoserine modification. Residues 658 to 674 show a composition bias toward basic and acidic residues; it reads DDGKENQTVHKNLDGLL.

It belongs to the glutaminase family. In terms of assembly, homotetramer, dimer of dimers. Tetramer composed of 68 and 65 kDa peptides in a 1:3 ratio. Can assemble into higher oligomers (in vitro), but the physiological significance of this is not clear. Interacts with RAF1 and MAP2K2. Interacts with ATCAY; the interaction is direct and may control GLS localization, negatively regulating its activity. Post-translationally, synthesized as a 74-kDa cytosolic precursor which is proteolytically processed by the mitochondrial-processing peptidase (MPP) via a 72-kDa intermediate to yield the mature mitochondrial 68- and 65-kDa subunits. In terms of tissue distribution, kidney, brain, and intestine.

The protein localises to the mitochondrion. Its subcellular location is the cytoplasm. It localises to the cytosol. It is found in the mitochondrion matrix. It carries out the reaction L-glutamine + H2O = L-glutamate + NH4(+). With respect to regulation, enzyme activity is increased by phosphate, due to increased kcat and increased substrate affinity. Functionally, catalyzes the first reaction in the primary pathway for the renal catabolism of glutamine. Plays a role in maintaining acid-base homeostasis. Regulates the levels of the neurotransmitter glutamate, the main excitatory neurotransmitter in the brain. The polypeptide is Glutaminase kidney isoform, mitochondrial (Gls) (Rattus norvegicus (Rat)).